Reading from the N-terminus, the 249-residue chain is ATP synthase subunit a, chloroplastic (249 aa).

5 helical membrane passes run Gln40–Val60, Val97–Leu117, Ile136–Ser156, Leu201–Leu221, and Gly222–Gly242.

The protein belongs to the ATPase A chain family. In terms of assembly, F-type ATPases have 2 components, CF(1) - the catalytic core - and CF(0) - the membrane proton channel. CF(1) has five subunits: alpha(3), beta(3), gamma(1), delta(1), epsilon(1). CF(0) has four main subunits: a, b, b' and c.

Its subcellular location is the plastid. It localises to the chloroplast thylakoid membrane. Key component of the proton channel; it plays a direct role in the translocation of protons across the membrane. The sequence is that of ATP synthase subunit a, chloroplastic from Draba nemorosa (Woodland whitlowgrass).